The chain runs to 437 residues: ATP-dependent RNA helicase RhlB (437 aa).

The Q motif signature appears at 9–37 (QKFADLGLEPTVLEGLDAQGFHYCTPIQA). One can recognise a Helicase ATP-binding domain in the interval 40-219 (LPVVLTGQDI…FEHMNSPESV (180 aa)). 53 to 60 (AQTGTGKT) provides a ligand contact to ATP. A DEAD box motif is present at residues 165–168 (DEAD). The region spanning 245 to 390 (RLLQTLIEEE…LSKYNSEALL (146 aa)) is the Helicase C-terminal domain. Residues 395 to 437 (APLRLQRTPRQGGNRRPNGNRQGQGQSRPRNNNRRHPQSQKQQ) are disordered. Positions 400 to 424 (QRTPRQGGNRRPNGNRQGQGQSRPR) are enriched in low complexity. Residues 425 to 437 (NNNRRHPQSQKQQ) are compositionally biased toward basic residues.

The protein belongs to the DEAD box helicase family. RhlB subfamily. In terms of assembly, component of the RNA degradosome, which is a multiprotein complex involved in RNA processing and mRNA degradation.

It is found in the cytoplasm. It carries out the reaction ATP + H2O = ADP + phosphate + H(+). In terms of biological role, DEAD-box RNA helicase involved in RNA degradation. Has RNA-dependent ATPase activity and unwinds double-stranded RNA. In Photobacterium profundum (strain SS9), this protein is ATP-dependent RNA helicase RhlB.